The primary structure comprises 72 residues: Translational regulator CsrA (72 aa).

This sequence belongs to the CsrA/RsmA family. Homodimer; the beta-strands of each monomer intercalate to form a hydrophobic core, while the alpha-helices form wings that extend away from the core.

The protein resides in the cytoplasm. Functionally, a translational regulator that binds mRNA to regulate translation initiation and/or mRNA stability. Usually binds in the 5'-UTR at or near the Shine-Dalgarno sequence preventing ribosome-binding, thus repressing translation. Its main target seems to be the major flagellin gene, while its function is anatagonized by FliW. The sequence is that of Translational regulator CsrA from Clostridium botulinum (strain Okra / Type B1).